Reading from the N-terminus, the 128-residue chain is Cytochrome c' (128 aa).

Heme c is bound by residues Q13, Q17, E69, T70, C118, C121, and H122.

Homodimer. Binds 1 heme c group covalently per subunit.

Functionally, cytochrome c' is the most widely occurring bacterial c-type cytochrome. Cytochromes c' are high-spin proteins and the heme has no sixth ligand. Their exact function is not known. This is Cytochrome c' from Magnetospirillum molischianum (Rhodospirillum molischianum).